Reading from the N-terminus, the 404-residue chain is MKLPIYLDYAATTPVDPRVAEKMMQCMTMDGIFGNPASRSHRYGWQAEEAVDIARNQVADLINADPREIVFTSGATESDNLAIKGVAHFYQKKGKHIITSKTEHKAVLDTCRQLEREGFEVTYLAPEANGLIPLATIESAMREDTVLVSIMHVNNEIGVIHDINAIGELCRSKKIIFHVDAAQSAGKLPLDVQETKVDLLSISAHKMYGPKGIGALYVRRKPRIRLEAAMHGGGHERGMRSGTLATHQIVGMGEAAAIAKADMEADNARIAGLRDRLWNGVKGIEETYINGDVEQRYCGSLNVSFNFVEGESLMMALKDLAVSSGSACTSASLEPSYVLRALGLNDEMAHSSIRFSIGRFTTEEEIDHAIETINKSIDSLRDMSPLWEMFKDGVDLEQVQWAHH.

Residues 75 to 76 (AT), Asn155, Gln183, and 203 to 205 (SAH) each bind pyridoxal 5'-phosphate. The residue at position 206 (Lys206) is an N6-(pyridoxal phosphate)lysine. Thr243 is a binding site for pyridoxal 5'-phosphate. Catalysis depends on Cys328, which acts as the Cysteine persulfide intermediate. Cys328 is a [2Fe-2S] cluster binding site.

The protein belongs to the class-V pyridoxal-phosphate-dependent aminotransferase family. NifS/IscS subfamily. In terms of assembly, homodimer. Forms a heterotetramer with IscU, interacts with other sulfur acceptors. The cofactor is pyridoxal 5'-phosphate.

Its subcellular location is the cytoplasm. It carries out the reaction (sulfur carrier)-H + L-cysteine = (sulfur carrier)-SH + L-alanine. Its pathway is cofactor biosynthesis; iron-sulfur cluster biosynthesis. Functionally, master enzyme that delivers sulfur to a number of partners involved in Fe-S cluster assembly, tRNA modification or cofactor biosynthesis. Catalyzes the removal of elemental sulfur atoms from cysteine to produce alanine. Functions as a sulfur delivery protein for Fe-S cluster synthesis onto IscU, an Fe-S scaffold assembly protein, as well as other S acceptor proteins. The protein is Cysteine desulfurase IscS of Shewanella woodyi (strain ATCC 51908 / MS32).